We begin with the raw amino-acid sequence, 153 residues long: Cyanate hydratase (153 aa).

Residues arginine 88, glutamate 91, and serine 114 contribute to the active site.

Belongs to the cyanase family.

The catalysed reaction is cyanate + hydrogencarbonate + 3 H(+) = NH4(+) + 2 CO2. Functionally, catalyzes the reaction of cyanate with bicarbonate to produce ammonia and carbon dioxide. This is Cyanate hydratase from Mycolicibacterium vanbaalenii (strain DSM 7251 / JCM 13017 / BCRC 16820 / KCTC 9966 / NRRL B-24157 / PYR-1) (Mycobacterium vanbaalenii).